The following is a 523-amino-acid chain: NEDD8-activating enzyme E1 regulatory subunit AXL (523 aa).

Belongs to the ubiquitin-activating E1 family. ULA1 subfamily. In terms of assembly, heterodimer of ECR1 and AXL1. The complex binds to RUB1/NEDD8 and RCE1.

The protein resides in the nucleus. Its pathway is protein modification; protein neddylation. In terms of biological role, regulatory subunit of the dimeric ECR1-AXL1 E1 enzyme. E1 activates RUB1/NEDD8 by first adenylating its C-terminal glycine residue with ATP, thereafter linking this residue to the side chain of the catalytic cysteine, yielding a RUB1-ECR1 thioester and free AMP. E1 finally transfers RUB1 to the catalytic cysteine of RCE1. May function redundantly with AXR1 in the RUB conjugating pathway. Seems not to be functionally equivalent to AXR1 in vivo. In Arabidopsis thaliana (Mouse-ear cress), this protein is NEDD8-activating enzyme E1 regulatory subunit AXL.